The chain runs to 279 residues: Diaminopimelate epimerase (279 aa).

The substrate site is built by asparagine 12, glutamine 45, and asparagine 65. Catalysis depends on cysteine 74, which acts as the Proton donor. Residues 75-76 (GN), asparagine 162, asparagine 195, and 213-214 (ER) each bind substrate. Cysteine 222 serves as the catalytic Proton acceptor. 223-224 (GS) contacts substrate.

It belongs to the diaminopimelate epimerase family. As to quaternary structure, homodimer.

It localises to the cytoplasm. It catalyses the reaction (2S,6S)-2,6-diaminopimelate = meso-2,6-diaminopimelate. It functions in the pathway amino-acid biosynthesis; L-lysine biosynthesis via DAP pathway; DL-2,6-diaminopimelate from LL-2,6-diaminopimelate: step 1/1. In terms of biological role, catalyzes the stereoinversion of LL-2,6-diaminopimelate (L,L-DAP) to meso-diaminopimelate (meso-DAP), a precursor of L-lysine and an essential component of the bacterial peptidoglycan. The polypeptide is Diaminopimelate epimerase (Shewanella loihica (strain ATCC BAA-1088 / PV-4)).